We begin with the raw amino-acid sequence, 188 residues long: uncharacterized protein (188 aa).

This is an uncharacterized protein from Autographa californica nuclear polyhedrosis virus (AcMNPV).